The sequence spans 100 residues: Urease subunit gamma (100 aa).

It belongs to the urease gamma subunit family. As to quaternary structure, heterotrimer of UreA (gamma), UreB (beta) and UreC (alpha) subunits. Three heterotrimers associate to form the active enzyme.

The protein localises to the cytoplasm. It catalyses the reaction urea + 2 H2O + H(+) = hydrogencarbonate + 2 NH4(+). Its pathway is nitrogen metabolism; urea degradation; CO(2) and NH(3) from urea (urease route): step 1/1. This chain is Urease subunit gamma, found in Hahella chejuensis (strain KCTC 2396).